We begin with the raw amino-acid sequence, 144 residues long: Urease accessory protein UreE (144 aa).

The protein belongs to the UreE family.

It localises to the cytoplasm. Its function is as follows. Involved in urease metallocenter assembly. Binds nickel. Probably functions as a nickel donor during metallocenter assembly. This is Urease accessory protein UreE from Thermosynechococcus vestitus (strain NIES-2133 / IAM M-273 / BP-1).